A 332-amino-acid chain; its full sequence is Glycerol-3-phosphate dehydrogenase [NAD(P)+] (332 aa).

Positions 11, 12, 32, 33, and 106 each coordinate NADPH. Lysine 106 and glycine 136 together coordinate sn-glycerol 3-phosphate. Alanine 140 provides a ligand contact to NADPH. Residues lysine 191, aspartate 244, serine 254, arginine 255, and asparagine 256 each contribute to the sn-glycerol 3-phosphate site. The active-site Proton acceptor is the lysine 191. NADPH is bound at residue arginine 255. NADPH is bound by residues valine 280 and glutamate 282.

Belongs to the NAD-dependent glycerol-3-phosphate dehydrogenase family.

The protein resides in the cytoplasm. It carries out the reaction sn-glycerol 3-phosphate + NAD(+) = dihydroxyacetone phosphate + NADH + H(+). The catalysed reaction is sn-glycerol 3-phosphate + NADP(+) = dihydroxyacetone phosphate + NADPH + H(+). Its pathway is membrane lipid metabolism; glycerophospholipid metabolism. In terms of biological role, catalyzes the reduction of the glycolytic intermediate dihydroxyacetone phosphate (DHAP) to sn-glycerol 3-phosphate (G3P), the key precursor for phospholipid synthesis. The chain is Glycerol-3-phosphate dehydrogenase [NAD(P)+] from Corynebacterium glutamicum (strain R).